Reading from the N-terminus, the 624-residue chain is Chaperone protein DnaK (624 aa).

Threonine 174 bears the Phosphothreonine; by autocatalysis mark. Disordered regions lie at residues 544–563 (KKAQ…DDLS) and 576–624 (NAQK…DDKK). Residues 581 to 600 (QQAQGGPASGAATDAGAAQG) show a composition bias toward low complexity. The span at 601–624 (SDDKKSDDDTINGDYKDVSDDDKK) shows a compositional bias: basic and acidic residues.

It belongs to the heat shock protein 70 family.

In terms of biological role, acts as a chaperone. In Lacticaseibacillus casei (strain BL23) (Lactobacillus casei), this protein is Chaperone protein DnaK.